Reading from the N-terminus, the 914-residue chain is MINSLLTRLFGSRNERQLRQLNSIVAKINALETELQKLSDTALQAKTTEFKQSIQDGKSLDKLLPEAFAVCREASRRVLGMRHYDVQLIGGMVLHLGKIAEMRTGEGKTLVATLPVYLNALAGNGVHVVTVNDYLARRDAAHMGRLYNWLGLSVGVVYPGMPHSDKHAAYGADITYGTNNEFGFDYLRDNMALSKADRYQRGLHYAIVDEVDSILIDEARTPLIISGPADESPDLYIRVNRIIPHLTRQENEEAEGDYWVDEKGKQVHLSEVGMERAEELLHQAGILGEEDDSLYAAQNLSVVHHLNAALRAHALYQRDVDYIVRDGEVVIVDEFTGRTLAGRRWSDGLHQAIEAKEGVPVQRENQTLASITFQNLFRIYKKLSGMTGTADTEAYEFQSIYGLEVMVIPTNRPTVRKDYPDQVFLNRSSKFNAVLEDIKDCAQRGQPVLVGTTSIEISEMLSEHLRKAKVKHEVLNAKQHEREATIVANAGLPGAVTIATNMAGRGTDIVLGGSLDTVLAELDPDATEEDRFRVKTAWNRRHEAVKAAGGLHIIGTERHESRRIDNQLRGRAGRQGDPGSSRFYLSLEDSLMRIFASEWVQKVMRLMGMKEGDVIEDRRVTRQIERAQRKVEAHNFDIRKNLLDYDDVNNEQRKVVYAQRDELLDAESIKENIDSIRHEVIDALVTRFVPEHSIDEQWDLPGLQATLQSEWGLHLPLIEMLKGREEVDAERIAFLVQDAVDKHCAEREASIGAETMRALEKHVMLTVLDQGWKEHLATMDYLRQGIHLRGYAQKQPKQEYKREAFELFSEMLEHVKREVIASLARVRIRSEEEMAALEEQERRQVDTLLRQSQFQHQEAGGYGTGDEAVSLQRQLAGQGAAIAQVIRDTPKVGRNDPCPCGSGKKYKHCHGLVT.

ATP is bound by residues Q87, 105–109 (GEGKT), and D508. C898, C900, C909, and H910 together coordinate Zn(2+).

It belongs to the SecA family. As to quaternary structure, monomer and homodimer. Part of the essential Sec protein translocation apparatus which comprises SecA, SecYEG and auxiliary proteins SecDF-YajC and YidC. It depends on Zn(2+) as a cofactor.

It is found in the cell inner membrane. The protein resides in the cytoplasm. It catalyses the reaction ATP + H2O + cellular proteinSide 1 = ADP + phosphate + cellular proteinSide 2.. In terms of biological role, part of the Sec protein translocase complex. Interacts with the SecYEG preprotein conducting channel. Has a central role in coupling the hydrolysis of ATP to the transfer of proteins into and across the cell membrane, serving both as a receptor for the preprotein-SecB complex and as an ATP-driven molecular motor driving the stepwise translocation of polypeptide chains across the membrane. This Xylella fastidiosa (strain 9a5c) protein is Protein translocase subunit SecA.